Reading from the N-terminus, the 188-residue chain is Pyridoxal 5'-phosphate synthase subunit PdxT (188 aa).

Gly-47 to Ser-49 serves as a coordination point for L-glutamine. The active-site Nucleophile is Cys-79. L-glutamine contacts are provided by residues Arg-105 and Ile-134–Arg-135. Catalysis depends on charge relay system residues His-170 and Glu-172.

It belongs to the glutaminase PdxT/SNO family. In the presence of PdxS, forms a dodecamer of heterodimers. Only shows activity in the heterodimer.

It catalyses the reaction aldehydo-D-ribose 5-phosphate + D-glyceraldehyde 3-phosphate + L-glutamine = pyridoxal 5'-phosphate + L-glutamate + phosphate + 3 H2O + H(+). The enzyme catalyses L-glutamine + H2O = L-glutamate + NH4(+). It functions in the pathway cofactor biosynthesis; pyridoxal 5'-phosphate biosynthesis. Functionally, catalyzes the hydrolysis of glutamine to glutamate and ammonia as part of the biosynthesis of pyridoxal 5'-phosphate. The resulting ammonia molecule is channeled to the active site of PdxS. The chain is Pyridoxal 5'-phosphate synthase subunit PdxT from Listeria welshimeri serovar 6b (strain ATCC 35897 / DSM 20650 / CCUG 15529 / CIP 8149 / NCTC 11857 / SLCC 5334 / V8).